Reading from the N-terminus, the 244-residue chain is Ribonuclease 3 (244 aa).

One can recognise an RNase III domain in the interval 21–148 (DHAPLLEAWG…MLGAIYLHHG (128 aa)). E61 lines the Mg(2+) pocket. The active site involves D65. Mg(2+)-binding residues include D134 and E137. E137 is an active-site residue. The region spanning 175-242 (DWKTVLLEKL…AKQAVQKLNE (68 aa)) is the DRBM domain.

It belongs to the ribonuclease III family. As to quaternary structure, homodimer. The cofactor is Mg(2+).

It is found in the cytoplasm. It catalyses the reaction Endonucleolytic cleavage to 5'-phosphomonoester.. Digests double-stranded RNA. Involved in the processing of primary rRNA transcript to yield the immediate precursors to the large and small rRNAs (23S and 16S). Processes some mRNAs, and tRNAs when they are encoded in the rRNA operon. Processes pre-crRNA and tracrRNA of type II CRISPR loci if present in the organism. This is Ribonuclease 3 from Corynebacterium jeikeium (strain K411).